The chain runs to 61 residues: Small ribosomal subunit protein uS14 (61 aa).

Residues C24, C27, C40, and C43 each contribute to the Zn(2+) site.

Belongs to the universal ribosomal protein uS14 family. Zinc-binding uS14 subfamily. Part of the 30S ribosomal subunit. Contacts proteins S3 and S10. The cofactor is Zn(2+).

Its function is as follows. Binds 16S rRNA, required for the assembly of 30S particles and may also be responsible for determining the conformation of the 16S rRNA at the A site. The sequence is that of Small ribosomal subunit protein uS14 from Anaeromyxobacter dehalogenans (strain 2CP-1 / ATCC BAA-258).